The following is a 186-amino-acid chain: MGKPYIRRQLNLSLNLEAKKAVVAEVAAVASQSHSAVAIEYRGLTVAEITKLRVAARKGDVYLRVVRNTLASRALEGTDFDCMREGLTGPLMLAFSREEPSAAARVIRDFGKEHPKLVVKMGCLGGRLLPPEGVENLAKMPTKEQAVAMLMGVLQAPIGKFARTLAEPTAKLVRTVAAVRDQKQAT.

It belongs to the universal ribosomal protein uL10 family. Part of the ribosomal stalk of the 50S ribosomal subunit. The N-terminus interacts with L11 and the large rRNA to form the base of the stalk. The C-terminus forms an elongated spine to which L12 dimers bind in a sequential fashion forming a multimeric L10(L12)X complex.

Functionally, forms part of the ribosomal stalk, playing a central role in the interaction of the ribosome with GTP-bound translation factors. This chain is Large ribosomal subunit protein uL10, found in Nitrosococcus oceani (strain ATCC 19707 / BCRC 17464 / JCM 30415 / NCIMB 11848 / C-107).